A 1330-amino-acid polypeptide reads, in one-letter code: Pre-mRNA-splicing factor CWC22 homolog (1330 aa).

A disordered region spans residues 1–377 (MGESDAESDS…AAKITERQRK (377 aa)). The span at 9–36 (DSSSNSSSSDTSSGSDSDARSESSSSES) shows a compositional bias: low complexity. Residues 46 to 94 (QEESAKDAKKTDDTDRGEKRAKERDAGQDEQPTEQKKTPAAEPRSERQH) show a composition bias toward basic and acidic residues. Over residues 99 to 113 (AGVEKQQEEAVAAAE) the composition is skewed to low complexity. The span at 115–135 (ESEKLNEAKKVETPVQRKEEA) shows a compositional bias: basic and acidic residues. Over residues 138 to 148 (SSVTKELNSPK) the composition is skewed to polar residues. Residues 149 to 166 (AQEENAARELEERRKDEE) show a composition bias toward basic and acidic residues. A compositionally biased stretch (polar residues) spans 168–177 (PVTTNGSSKE). Phosphothreonine is present on residues T191 and T201. Basic and acidic residues-rich tracts occupy residues 191-201 (TADHIEEGEIT) and 208-236 (LPTKEEKKAVASKSPPKETQRKQSRSPDG). Phosphoserine is present on residues S219 and S221. A compositionally biased stretch (basic residues) spans 252–277 (SRRRRRSRSKGSRTRSRSKSPIRRRS). Basic and acidic residues-rich tracts occupy residues 278–307 (NSLERRRVERQRRHEERDKRDEERAKEREK) and 316–325 (SSRRRDDSRE). The segment covering 355–366 (TETNADNETVTE) has biased composition (low complexity). The region spanning 420–603 (KKSIHGYINK…EVLFQIRKDG (184 aa)) is the MIF4G domain. Positions 660–697 (REILGSDDGSSSGSGSGSDSDSDSDGESGSDAEKKAEA) are disordered. Over residues 665–678 (SDDGSSSGSGSGSD) the composition is skewed to low complexity. Positions 679–689 (SDSDSDGESGS) are enriched in acidic residues. The MI domain occupies 710 to 826 (ALRRTIYLTI…SWDVLECIQL (117 aa)). The segment at 926-1330 (FRDGSAPAGN…RSSRRSKGRS (405 aa)) is disordered. The span at 941-951 (SSSSSSSSSSD) shows a compositional bias: low complexity. Acidic residues predominate over residues 952 to 963 (TDSEDSSEEDSS). Positions 964-976 (SDSSSESSSSDSS) are enriched in low complexity. Residues 980–1012 (KKKRKRKDKDKKKSKKATKEKSKKTKNKKKKKK) show a composition bias toward basic residues. The segment covering 1013–1033 (AEKEQEKEKEKQRKSKKEKEK) has biased composition (basic and acidic residues). Residues 1034 to 1054 (DKKRKKEEKKAAKKKSKHRRK) are compositionally biased toward basic residues. Low complexity predominate over residues 1072–1082 (SESSDSSNSSS). Residues 1089–1110 (PQAKIKRQEHVEKNKFRGRTQD) are compositionally biased toward basic and acidic residues. The residue at position 1108 (T1108) is a Phosphothreonine. S1111, S1121, S1180, and S1181 each carry phosphoserine. Basic and acidic residues-rich tracts occupy residues 1133–1195 (RRRD…VAHD) and 1203–1320 (SRSY…SRRE). Phosphotyrosine is present on Y1182. The span at 1321-1330 (RSSRRSKGRS) shows a compositional bias: basic residues.

It belongs to the CWC22 family. In terms of assembly, component of the spliceosome C complex. Interacts with eIF4AIII.

It is found in the nucleus speckle. Required for pre-mRNA splicing and for exon-junction complex (EJC) assembly. Hinders eIF4AIII from non-specifically binding RNA and escorts it to the splicing machinery to promote EJC assembly on mature mRNAs. The sequence is that of Pre-mRNA-splicing factor CWC22 homolog (ncm) from Drosophila melanogaster (Fruit fly).